Reading from the N-terminus, the 93-residue chain is Phosphoribosyl-ATP pyrophosphatase (93 aa).

Belongs to the PRA-PH family.

It localises to the cytoplasm. It catalyses the reaction 1-(5-phospho-beta-D-ribosyl)-ATP + H2O = 1-(5-phospho-beta-D-ribosyl)-5'-AMP + diphosphate + H(+). It functions in the pathway amino-acid biosynthesis; L-histidine biosynthesis; L-histidine from 5-phospho-alpha-D-ribose 1-diphosphate: step 2/9. The protein is Phosphoribosyl-ATP pyrophosphatase of Mycolicibacterium gilvum (strain PYR-GCK) (Mycobacterium gilvum (strain PYR-GCK)).